A 494-amino-acid polypeptide reads, in one-letter code: GlcNAc-binding protein A (494 aa).

The N-terminal stretch at 1 to 21 is a signal peptide; it reads MKLNKIMLAMVVMSISGTAMA. In terms of domain architecture, Chitin-binding type-4 spans 22–192; the sequence is HGYIENPPSR…TFYNMIDAEF (171 aa). The region spanning 435–484 is the Chitin-binding type-3 domain; the sequence is APAWSNKSSYQAKDTVTHNGRIYMSKWWADKASVPGDAAVTDTTGNGSGW. The disordered stretch occupies residues 474-494; it reads VTDTTGNGSGWGKVWEDKGAC.

The protein belongs to the GbpA family.

The protein resides in the secreted. Probably interacts with GlcNAc residues. May promote attachment to both epithelial cell surfaces and chitin. This Yersinia enterocolitica serotype O:8 / biotype 1B (strain NCTC 13174 / 8081) protein is GlcNAc-binding protein A.